A 250-amino-acid chain; its full sequence is Proteasome subunit alpha type-4-2 (250 aa).

In terms of assembly, the 26S proteasome consists of a 20S proteasome core and two 19S regulatory subunits. The 20S proteasome core is composed of 28 subunits that are arranged in four stacked rings, resulting in a barrel-shaped structure. The two end rings are each formed by seven alpha subunits, and the two central rings are each formed by seven beta subunits. The catalytic chamber with the active sites is on the inside of the barrel.

It is found in the cytoplasm. Its subcellular location is the nucleus. Functionally, the proteasome is a multicatalytic proteinase complex which is characterized by its ability to cleave peptides with Arg, Phe, Tyr, Leu, and Glu adjacent to the leaving group at neutral or slightly basic pH. The proteasome has an ATP-dependent proteolytic activity. The protein is Proteasome subunit alpha type-4-2 of Oryza sativa subsp. indica (Rice).